The primary structure comprises 420 residues: MSTPIETAWQLAKARYASLNIDVEAALEQLDQIPVSMHCWQGDDVAGFENTGGPLTGGIQATGNYPGKASTPDELRADLEQAFALIPGPKRLNLHAIYLESAQPVARNEIAPEHFRTWVEWAKRHQLGLDFNPTCFSHPLSADGFTLSHPDEKVRRFWIEHCQASRRISAYFGRELGTPSVMNIWVPDGMKDLTIDRLAFRQRLLSALDEIIAEPLDQAHHIDAVESKLFGIGAESFTVGSNEFYLGYAASRGTALCLDAGHFHPTEVISDKISSAILYVPRLLLHVSRPVRWDSDHVVLLDDETQAIAHEIVRHKLLNRVHIGLDFFDASINRIAAWVIGTRNMKKALLRALLEPTETLRKLEQNGDYTARLALLEEQKSLPWQAVWEHYCQCHDVIPGSEWLQQVRQYEETILTQRQG.

Mn(2+) contacts are provided by H262, D294, and D296.

Belongs to the rhamnose isomerase family. As to quaternary structure, homotetramer. Requires Mn(2+) as cofactor.

The protein localises to the cytoplasm. It carries out the reaction L-rhamnopyranose = L-rhamnulose. It participates in carbohydrate degradation; L-rhamnose degradation; glycerone phosphate from L-rhamnose: step 1/3. In terms of biological role, catalyzes the interconversion of L-rhamnose and L-rhamnulose. The sequence is that of L-rhamnose isomerase from Pectobacterium carotovorum subsp. carotovorum (strain PC1).